The sequence spans 284 residues: Nucleotide-binding protein Shewmr4_0670 (284 aa).

ATP is bound at residue 8–15 (GRSGSGKS). A GTP-binding site is contributed by 56–59 (DVRN).

The protein belongs to the RapZ-like family.

Displays ATPase and GTPase activities. This Shewanella sp. (strain MR-4) protein is Nucleotide-binding protein Shewmr4_0670.